The sequence spans 167 residues: Ureidoglycolate lyase (167 aa).

The protein belongs to the ureidoglycolate lyase family. In terms of assembly, homodimer. Ni(2+) is required as a cofactor.

The catalysed reaction is (S)-ureidoglycolate = urea + glyoxylate. It functions in the pathway nitrogen metabolism; (S)-allantoin degradation. Functionally, catalyzes the catabolism of the allantoin degradation intermediate (S)-ureidoglycolate, generating urea and glyoxylate. Involved in the utilization of allantoin as nitrogen source. This chain is Ureidoglycolate lyase, found in Pseudomonas fluorescens (strain ATCC BAA-477 / NRRL B-23932 / Pf-5).